A 411-amino-acid chain; its full sequence is Fructose-1,6-bisphosphatase, chloroplastic (411 aa).

The N-terminal 53 residues, 1 to 53 (MAATAGATPSSHLLLSSSRHVAASPQPRILFPSLSGKRVAVGKNHHATGVRCM), are a transit peptide targeting the chloroplast. E133, E162, D183, L185, and D186 together coordinate Mg(2+). Residue 186 to 189 (DGSS) participates in substrate binding. C227 and C232 are disulfide-bonded. Substrate contacts are provided by N291, Y323, Y341, Y343, and K353. A Mg(2+)-binding site is contributed by E359.

This sequence belongs to the FBPase class 1 family. As to quaternary structure, homotetramer. It depends on Mg(2+) as a cofactor.

It localises to the plastid. The protein localises to the chloroplast stroma. The enzyme catalyses beta-D-fructose 1,6-bisphosphate + H2O = beta-D-fructose 6-phosphate + phosphate. It participates in carbohydrate biosynthesis; Calvin cycle. This chain is Fructose-1,6-bisphosphatase, chloroplastic (FBP), found in Brassica napus (Rape).